A 248-amino-acid chain; its full sequence is Cobalt transport protein CbiM (248 aa).

Positions 1–29 are cleaved as a signal peptide; it reads MKRVSVKNYLVCLLIAVCAIFVFPANASA. 6 consecutive transmembrane segments (helical) span residues 40-60, 72-92, 104-124, 136-156, 167-187, and 210-230; these read GWCI…FFSI, TLLA…MPSV, LGAV…ILLF, TLGA…FGVF, GLAV…ITSV, and IFGF…VVIY.

It belongs to the CbiM family. As to quaternary structure, forms an energy-coupling factor (ECF) transporter complex composed of an ATP-binding protein (A component, CbiO), a transmembrane protein (T component, CbiQ) and 2 possible substrate-capture proteins (S components, CbiM and CbiN) of unknown stoichimetry.

The protein resides in the cell membrane. It functions in the pathway cofactor biosynthesis; adenosylcobalamin biosynthesis. Part of the energy-coupling factor (ECF) transporter complex CbiMNOQ involved in cobalt import. This Ruminiclostridium cellulolyticum (strain ATCC 35319 / DSM 5812 / JCM 6584 / H10) (Clostridium cellulolyticum) protein is Cobalt transport protein CbiM.